Reading from the N-terminus, the 332-residue chain is MAMASASSSSSSISVIIFLLLAPLCLSREPPSQIPNGTLDLSLLWYGQFTPTQKERVHDFIESLNFDAKEGLDPKVSAWWKVVESYQERFEVKDIYRQKKSNRTVAPRIKVKVVRSYVDEKMKYGKELTMGNGEKLVETAIGNMSKVVPVVLLSAQVRAHGVGFCDGTCQHNALAKIKGQKEPRRYIMVSNPEVECPGECAWPFHTADKGPRGMTYQPASGEVGADALVIQLATGLADLATNPDLTKSLFKSETTPYNDDVKKNHESSSMYIVDPATKCTRVFGSGAFPGFTGRIRVDPITGGAFNSHGINHLKFLIPSIWDPKTKSCWTPM.

The N-terminal stretch at 1 to 27 (MAMASASSSSSSISVIIFLLLAPLCLS) is a signal peptide. N-linked (GlcNAc...) asparagine glycosylation is found at N36, N102, and N143.

It belongs to the EXORDIUM family.

Its subcellular location is the secreted. It localises to the extracellular space. The protein localises to the apoplast. In terms of biological role, may play a role in a brassinosteroid-dependent regulation of growth and development. The chain is Protein EXORDIUM-like 6 (EXL6) from Arabidopsis thaliana (Mouse-ear cress).